Consider the following 224-residue polypeptide: 7-cyano-7-deazaguanine synthase (224 aa).

10–20 (VSGGLDSATVL) serves as a coordination point for ATP. Zn(2+) is bound by residues Cys189, Cys199, Cys202, and Cys205.

The protein belongs to the QueC family. It depends on Zn(2+) as a cofactor.

It carries out the reaction 7-carboxy-7-deazaguanine + NH4(+) + ATP = 7-cyano-7-deazaguanine + ADP + phosphate + H2O + H(+). Its pathway is purine metabolism; 7-cyano-7-deazaguanine biosynthesis. Catalyzes the ATP-dependent conversion of 7-carboxy-7-deazaguanine (CDG) to 7-cyano-7-deazaguanine (preQ(0)). The protein is 7-cyano-7-deazaguanine synthase of Nitrosococcus oceani (strain ATCC 19707 / BCRC 17464 / JCM 30415 / NCIMB 11848 / C-107).